The following is a 272-amino-acid chain: uncharacterized protein (272 aa).

Belongs to the sodium:galactoside symporter (TC 2.A.2) family.

This is an uncharacterized protein from Pseudescherichia vulneris (Escherichia vulneris).